The following is a 363-amino-acid chain: RNA polymerase II holoenzyme cyclin-like subunit (363 aa).

One can recognise a Cyclin N-terminal domain in the interval 53-143 (YQMLRLAKNL…IGECEFWLIS (91 aa)). The tract at residues 252–312 (TPGGSGSPAM…SPQKEKSKLQ (61 aa)) is disordered. The span at 265–276 (IQQNPPNQAYQL) shows a compositional bias: polar residues. Low complexity predominate over residues 277 to 298 (TPQQQEMFRQQQMQQQNRQPET). Basic and acidic residues predominate over residues 299–310 (QAKDSPQKEKSK).

Belongs to the cyclin family. Cyclin C subfamily. As to quaternary structure, component of the SRB8-11 complex, a regulatory module of the Mediator complex.

Its subcellular location is the nucleus. In terms of biological role, component of the SRB8-11 complex. The SRB8-11 complex is a regulatory module of the Mediator complex which is itself involved in regulation of basal and activated RNA polymerase II-dependent transcription. The SRB8-11 complex may be involved in the transcriptional repression of a subset of genes regulated by Mediator. It may inhibit the association of the Mediator complex with RNA polymerase II to form the holoenzyme complex. The SRB8-11 complex phosphorylates the C-terminal domain (CTD) of the largest subunit of RNA polymerase II. In Pyricularia oryzae (strain 70-15 / ATCC MYA-4617 / FGSC 8958) (Rice blast fungus), this protein is RNA polymerase II holoenzyme cyclin-like subunit (SSN8).